The primary structure comprises 218 residues: Serine/threonine-protein phosphatase 1 (218 aa).

Mn(2+)-binding residues include aspartate 24, histidine 26, aspartate 53, and asparagine 79. The Proton donor role is filled by histidine 80. Mn(2+) is bound at residue histidine 187.

This sequence belongs to the PPP phosphatase family. PP-1 subfamily. Mn(2+) serves as cofactor.

The enzyme catalyses O-phospho-L-seryl-[protein] + H2O = L-seryl-[protein] + phosphate. The catalysed reaction is O-phospho-L-threonyl-[protein] + H2O = L-threonyl-[protein] + phosphate. In terms of biological role, plays a key role in signaling protein misfolding via the CpxR/CPXA transducing system. It also modulates the phosphorylated status of many phosphoproteins in E.coli, some of which acting as major chaperones. Has been shown, in vitro, to act on Ser, Thr and Tyr-phosphorylated substrates. The polypeptide is Serine/threonine-protein phosphatase 1 (pphA) (Escherichia coli (strain K12)).